Consider the following 129-residue polypeptide: Small ribosomal subunit protein uS9 (129 aa).

This sequence belongs to the universal ribosomal protein uS9 family.

The polypeptide is Small ribosomal subunit protein uS9 (Chlorobium luteolum (strain DSM 273 / BCRC 81028 / 2530) (Pelodictyon luteolum)).